The chain runs to 178 residues: ATP-dependent protease subunit HslV (178 aa).

Threonine 5 is a catalytic residue. The Na(+) site is built by alanine 160, cysteine 163, and threonine 166.

The protein belongs to the peptidase T1B family. HslV subfamily. A double ring-shaped homohexamer of HslV is capped on each side by a ring-shaped HslU homohexamer. The assembly of the HslU/HslV complex is dependent on binding of ATP.

The protein localises to the cytoplasm. The catalysed reaction is ATP-dependent cleavage of peptide bonds with broad specificity.. With respect to regulation, allosterically activated by HslU binding. Its function is as follows. Protease subunit of a proteasome-like degradation complex believed to be a general protein degrading machinery. The sequence is that of ATP-dependent protease subunit HslV from Magnetococcus marinus (strain ATCC BAA-1437 / JCM 17883 / MC-1).